The primary structure comprises 695 residues: MVPTSLSPDDTSDPVPRSSSDIQGFCHNYPLRRHKYEDQANKGSQQCRDDWEQYIGPIERWGCGNPWEGHFAAVVLPFCRPDRIAIISYCFEYAFMYDNVVESAAKSTVNINRDDIALDETEYRTVRSVTGTKQIQSKMLLDLLSIDPVCAEVVIDSWKTMIDTTVKQDKTRTFSNLEEYVDFRIIDTGAPFVDTLMRFGMNILLTPEEEELVAPIVKPCYAALGLANDYFSFDIEWEEFQQPESNQSTMTNAVWLFMQWHQVDEQEAKRRVRQVTNDYEREYQQRVRDFISGEGKSNTKLQLYLTALGYQIPGNIAWSLRCPRYHPWLCEEGSALLRASMDEARDVCNEGKRRSISGDSISSESSVWSGASDRSARSSVSSAPSLDEGKEPDRVMLGTEHLLGPAEYIASLPSKGVREAFIDALNVWLVLPDRFVGVIKSIAKTLHNASLMLDDIEDGSPLRRGQPATHTIFGQALTINSANFVLIQAMDQVRQLEDSRCLDIFVEEMRNLFIGQSFDLYWTRQDECPSEEEYREMIRQKTGGLFRLVARLMMQKATLKKNQHISLEPLVDLMGEYFQIRDDYKNLTEEYTGQKGFCEDLDEGKFSFPLIHAHKLLPEWSEIRLLLQQGRQSGGLDVTQKQLVLGRLHDSGSMAYTEKTLRGLMGEIRLRIDQVEKESGCSNWVLKLLVHRLEV.

The tract at residues 1–23 (MVPTSLSPDDTSDPVPRSSSDIQ) is disordered. The interval 7–332 (SPDDTSDPVP…PRYHPWLCEE (326 aa)) is terpene cyclase. Position 98 (Asp98) interacts with Mg(2+). Substrate contacts are provided by residues Asp98, 184 to 187 (RIID), Asn228, 232 to 236 (SFDIE), and 324 to 325 (RY). Residues 98–102 (DNVVE) carry the DDXXD 1 motif. The NSE/DTE motif lies at 228 to 236 (NDYFSFDIE). The disordered stretch occupies residues 353-392 (RRSISGDSISSESSVWSGASDRSARSSVSSAPSLDEGKEP). Residues 357 to 385 (SGDSISSESSVWSGASDRSARSSVSSAPS) show a composition bias toward low complexity. Lys415, Arg418, and His447 together coordinate isopentenyl diphosphate. Asp454 and Asp458 together coordinate Mg(2+). The DDXXD 2 motif lies at 454 to 458 (DDIED). Arg463 lines the dimethylallyl diphosphate pocket. Arg464 provides a ligand contact to isopentenyl diphosphate. Dimethylallyl diphosphate is bound by residues Lys541, Thr542, Gln579, Asn586, Lys595, and Lys605.

This sequence in the N-terminal section; belongs to the terpene synthase family. The protein in the C-terminal section; belongs to the FPP/GGPP synthase family. In terms of assembly, hexamer. Mg(2+) serves as cofactor.

It carries out the reaction isopentenyl diphosphate + (2E,6E)-farnesyl diphosphate = (2E,6E,10E)-geranylgeranyl diphosphate + diphosphate. It catalyses the reaction (2E,6E,10E)-geranylgeranyl diphosphate = variediene + diphosphate. It functions in the pathway secondary metabolite biosynthesis; terpenoid biosynthesis. Functionally, bifunctional terpene synthase converts DMAPP and IPP, and also GGPP, into variediene as a single product. The C-terminal prenyltransferase domain of AbVS catalyzes formation of GGPP, whereas the N-terminal terpene cyclase domain catalyzes the cyclization of GGPP to variediene. This chain is Variediene synthase, found in Aspergillus brasiliensis (strain CBS 101740 / IMI 381727 / IBT 21946).